Consider the following 575-residue polypeptide: Muellerian-inhibiting factor (575 aa).

An N-terminal signal peptide occupies residues 1–20 (MQGPSLSQLVLVLMGALLEA). Residues 21–466 (GTPREEVSST…ERSGPARAQR (446 aa)) constitute a propeptide that is removed on maturation. Residues Asn78 and Asn343 are each glycosylated (N-linked (GlcNAc...) asparagine). Disulfide bonds link Cys477–Cys541, Cys503–Cys572, and Cys507–Cys574.

It belongs to the TGF-beta family. Homodimer; disulfide-linked. Post-translationally, preproprotein is proteolytically processed to generate N- and C-terminal cleavage products that homodimerize and associate to form a biologically active non-covalent complex. Binding of the non-covalent complex to AMHR2 induces dissociation of the pro-region from the mature C-terminal dimer. The N-terminal portion of the protein, despite having no intrinsic activity, has the role of amplifying the activity of the C-terminus. As to expression, detected in fetal Sertoli cells. Expressed in granulosa cells of growing follicles but also in theca cells of preovulatory follicles and corpora lutea (at protein level).

It localises to the secreted. In terms of biological role, plays an important role in several reproductive functions. Induces Muellerian duct regression during male fetal sexual differentiation and plays a role in Leydig cell differentiation and function. In female acts as a negative regulator of the primordial to primary follicle transition and decreases FSH sensitivity of growing follicles. AMH signals by binding to a specific type-II receptor, AMHR2, that heterodimerizes with type-I receptors (ACVR1 and BMPR1A), and recruiting SMAD proteins that are translocated to the nucleus to regulate target gene expression. The chain is Muellerian-inhibiting factor (AMH) from Sus scrofa (Pig).